We begin with the raw amino-acid sequence, 323 residues long: Thymidylate synthase (323 aa).

DUMP-binding positions include Arg21 and 172 to 173 (RR). Cys192 acts as the Nucleophile in catalysis. Residues 214–217 (RSND), Asn225, and 255–257 (HVY) contribute to the dUMP site. Asp217 is a binding site for (6R)-5,10-methylene-5,6,7,8-tetrahydrofolate. Ala322 contributes to the (6R)-5,10-methylene-5,6,7,8-tetrahydrofolate binding site.

The protein belongs to the thymidylate synthase family. Bacterial-type ThyA subfamily. As to quaternary structure, homodimer.

Its subcellular location is the cytoplasm. It carries out the reaction dUMP + (6R)-5,10-methylene-5,6,7,8-tetrahydrofolate = 7,8-dihydrofolate + dTMP. The protein operates within pyrimidine metabolism; dTTP biosynthesis. Its function is as follows. Catalyzes the reductive methylation of 2'-deoxyuridine-5'-monophosphate (dUMP) to 2'-deoxythymidine-5'-monophosphate (dTMP) while utilizing 5,10-methylenetetrahydrofolate (mTHF) as the methyl donor and reductant in the reaction, yielding dihydrofolate (DHF) as a by-product. This enzymatic reaction provides an intracellular de novo source of dTMP, an essential precursor for DNA biosynthesis. This Pseudomonas putida (strain ATCC 47054 / DSM 6125 / CFBP 8728 / NCIMB 11950 / KT2440) protein is Thymidylate synthase.